Reading from the N-terminus, the 85-residue chain is Small ribosomal subunit protein bS18c (85 aa).

Belongs to the bacterial ribosomal protein bS18 family. As to quaternary structure, part of the 30S ribosomal subunit.

It localises to the plastid. It is found in the chloroplast. The polypeptide is Small ribosomal subunit protein bS18c (Tupiella akineta (Green alga)).